A 262-amino-acid chain; its full sequence is MDYTTQSDLSLSKSMQNIKLKIAYDGQAYFGWQKTPAGPSVEKTLQNSLEQILQHTISLQAASRTDKGVHARGQIVNFLTTKSITDLQKFILSLNSLLPTDLRILSAEKMPSTFHPTLNCVAKEYCYYICYDFVQLPEYRPYSWHCPFPLMLGKMTQAISVLIGEHDFSAFCNFKKNVNYTDYIRRVQAIHLEVLNHKRLCIRIKGNHFLYKMVRNIVGTLIYIGKGKLMVEDIPSILQSQDRKMAGVTAPAHGLFLQTVLY.

Asp66 (nucleophile) is an active-site residue. Tyr125 is a binding site for substrate.

The protein belongs to the tRNA pseudouridine synthase TruA family. As to quaternary structure, homodimer.

It catalyses the reaction uridine(38/39/40) in tRNA = pseudouridine(38/39/40) in tRNA. In terms of biological role, formation of pseudouridine at positions 38, 39 and 40 in the anticodon stem and loop of transfer RNAs. The chain is tRNA pseudouridine synthase A 2 from Protochlamydia amoebophila (strain UWE25).